The chain runs to 100 residues: Large ribosomal subunit protein uL23 (100 aa).

This sequence belongs to the universal ribosomal protein uL23 family. Part of the 50S ribosomal subunit. Contacts protein L29, and trigger factor when it is bound to the ribosome.

Functionally, one of the early assembly proteins it binds 23S rRNA. One of the proteins that surrounds the polypeptide exit tunnel on the outside of the ribosome. Forms the main docking site for trigger factor binding to the ribosome. The sequence is that of Large ribosomal subunit protein uL23 from Prochlorococcus marinus (strain MIT 9301).